The chain runs to 233 residues: Methyltransferase srdJ (233 aa).

Positions 1-32 (MFQVQTAGTRTGTSSPDTTTSEAGLGSTPPMP) are disordered. Residues 9–21 (TRTGTSSPDTTTS) show a composition bias toward low complexity. Trp40, Trp52, and Gly81 together coordinate S-adenosyl-L-methionine. Residues 140–146 (EISSQKY) carry the Required for methyltransferase activity motif.

The protein belongs to the methyltransferase superfamily.

In terms of biological role, methyltransferase; part of the gene cluster that mediates the biosynthesis of sordarial, a salicylic aldehyde structurally related to the phytotoxin pyriculol. The most interesting aspect of this pathway is formation of an aromatic product from the highly reducing polyketide synthase srdA. SrdA synthesizes a reduced polyketide chain from one molecule of acetyl-CoA and five molecules of malonyl-CoA. The polyketide chain is then reductively released as an aldehyde. The oxidoreductases srdC, srdD and srdE then oxidize one of the hydroxy groups to facilitate the intramolecular aldol condensation, followed by dehydration to yield a salicylic aldehyde. This aldehyde can undergo facile reduction by endogenous reductases to yield the alcohol 1-hydroxy-2-hydroxymethyl-3-pent-1,3-dienylbenzene. The flavin-dependent srdI counteract against the propensity of the aldehydes to be reduced under physiological conditions and is responsible for reoxidizing 1-hydroxy-2-hydroxymethyl-3-pent-1,3-dienylbenzene back to the salicylic aldehyde. This salicylic aldehyde is then selectively epoxidized by the cupin-domain-containing oxidoreductase srdB to yield the epoxide, which can be hydrolyzed stereoselectively by the hydrolase srdG to give the final product sordarial. The sequence is that of Methyltransferase srdJ from Neurospora crassa (strain ATCC 24698 / 74-OR23-1A / CBS 708.71 / DSM 1257 / FGSC 987).